Reading from the N-terminus, the 101-residue chain is NAD(P)H-quinone oxidoreductase subunit 4L, chloroplastic (101 aa).

3 helical membrane passes run 2–22 (MLEH…YGLI), 32–52 (MCLE…SDLF), and 61–81 (IFSI…LAII).

The protein belongs to the complex I subunit 4L family. NDH is composed of at least 16 different subunits, 5 of which are encoded in the nucleus.

The protein resides in the plastid. The protein localises to the chloroplast thylakoid membrane. The catalysed reaction is a plastoquinone + NADH + (n+1) H(+)(in) = a plastoquinol + NAD(+) + n H(+)(out). The enzyme catalyses a plastoquinone + NADPH + (n+1) H(+)(in) = a plastoquinol + NADP(+) + n H(+)(out). In terms of biological role, NDH shuttles electrons from NAD(P)H:plastoquinone, via FMN and iron-sulfur (Fe-S) centers, to quinones in the photosynthetic chain and possibly in a chloroplast respiratory chain. The immediate electron acceptor for the enzyme in this species is believed to be plastoquinone. Couples the redox reaction to proton translocation, and thus conserves the redox energy in a proton gradient. The chain is NAD(P)H-quinone oxidoreductase subunit 4L, chloroplastic from Ranunculus macranthus (Large buttercup).